The following is a 385-amino-acid chain: DNA replication and repair protein RecF (385 aa).

30-37 contacts ATP; that stretch reads GSNGFGKT.

Belongs to the RecF family.

Its subcellular location is the cytoplasm. In terms of biological role, the RecF protein is involved in DNA metabolism; it is required for DNA replication and normal SOS inducibility. RecF binds preferentially to single-stranded, linear DNA. It also seems to bind ATP. In Mycobacterium avium (strain 104), this protein is DNA replication and repair protein RecF.